Reading from the N-terminus, the 248-residue chain is NADH dehydrogenase [ubiquinone] flavoprotein 2, mitochondrial (248 aa).

The transit peptide at 1 to 31 (MFSLALRARASGLTAQWGRHARNLHKTAVQN) directs the protein to the mitochondrion. Residues Cys134, Cys139, Cys175, and Cys179 each contribute to the [2Fe-2S] cluster site. Tyr192 is subject to Phosphotyrosine; by SRC. The tract at residues 229 to 248 (GLTSLTEPPKGPGFGVQAGL) is disordered.

The protein belongs to the complex I 24 kDa subunit family. Core subunit of respiratory chain NADH dehydrogenase (Complex I) which is composed of 45 different subunits. This is a component of the flavoprotein-sulfur (FP) fragment of the enzyme. [2Fe-2S] cluster serves as cofactor.

Its subcellular location is the mitochondrion inner membrane. The catalysed reaction is a ubiquinone + NADH + 5 H(+)(in) = a ubiquinol + NAD(+) + 4 H(+)(out). Functionally, core subunit of the mitochondrial membrane respiratory chain NADH dehydrogenase (Complex I) which catalyzes electron transfer from NADH through the respiratory chain, using ubiquinone as an electron acceptor. Parts of the peripheral arm of the enzyme, where the electrons from NADH are accepted by flavin mononucleotide (FMN) and then passed along a chain of iron-sulfur clusters by electron tunnelling to the final acceptor ubiquinone. Contains one iron-sulfur cluster. This chain is NADH dehydrogenase [ubiquinone] flavoprotein 2, mitochondrial, found in Rattus norvegicus (Rat).